The chain runs to 168 residues: ATP synthase subunit b (168 aa).

The chain crosses the membrane as a helical span at residues 9–29; that stretch reads AIPFGTIAYTLFIFLLLLVML.

It belongs to the ATPase B chain family. As to quaternary structure, F-type ATPases have 2 components, F(1) - the catalytic core - and F(0) - the membrane proton channel. F(1) has five subunits: alpha(3), beta(3), gamma(1), delta(1), epsilon(1). F(0) has three main subunits: a(1), b(2) and c(10-14). The alpha and beta chains form an alternating ring which encloses part of the gamma chain. F(1) is attached to F(0) by a central stalk formed by the gamma and epsilon chains, while a peripheral stalk is formed by the delta and b chains.

The protein resides in the cell membrane. Its function is as follows. F(1)F(0) ATP synthase produces ATP from ADP in the presence of a proton or sodium gradient. F-type ATPases consist of two structural domains, F(1) containing the extramembraneous catalytic core and F(0) containing the membrane proton channel, linked together by a central stalk and a peripheral stalk. During catalysis, ATP synthesis in the catalytic domain of F(1) is coupled via a rotary mechanism of the central stalk subunits to proton translocation. In terms of biological role, component of the F(0) channel, it forms part of the peripheral stalk, linking F(1) to F(0). The chain is ATP synthase subunit b from Bacillus cereus (strain ATCC 10987 / NRS 248).